The following is a 105-amino-acid chain: Small ribosomal subunit protein uS10c (105 aa).

The protein belongs to the universal ribosomal protein uS10 family. Part of the 30S ribosomal subunit.

The protein resides in the plastid. Its subcellular location is the chloroplast. In terms of biological role, involved in the binding of tRNA to the ribosomes. This chain is Small ribosomal subunit protein uS10c, found in Porphyra purpurea (Red seaweed).